A 503-amino-acid chain; its full sequence is Pentatricopeptide repeat-containing protein At2g30100, chloroplastic (503 aa).

The transit peptide at 1-50 (MAYAHVFASLTISTISLRRFLPRLHRNHSVKPNSRIICNLKLNYSAGKFR) directs the protein to the chloroplast. PPR repeat units lie at residues 341–375 (IGVV…GREP), 376–410 (EADL…GSQR), and 411–445 (KKKT…GLHP).

The protein belongs to the PPR family. P subfamily.

The protein resides in the plastid. Its subcellular location is the chloroplast. The sequence is that of Pentatricopeptide repeat-containing protein At2g30100, chloroplastic from Arabidopsis thaliana (Mouse-ear cress).